The following is a 587-amino-acid chain: Dynein axonemal intermediate chain 2 (587 aa).

WD repeat units lie at residues 214 to 254 (RPAS…NPVE), 261 to 302 (SHRD…EPTE), 362 to 401 (GHHG…SSIM), and 405 to 445 (YHTS…NNPS). Disordered regions lie at residues 519 to 542 (LKER…DMKE) and 562 to 587 (KEQQ…IVHE).

Belongs to the dynein intermediate chain family. Consists of at least two heavy chains and a number of intermediate and light chains. Interacts with DNAAF2. Interacts with DNAAF6/PIH1D3. Interacts with HEATR2; probably involved in outer arm dynein assembly. Interacts with C16ORF71/DAAP1.

It localises to the cytoplasm. The protein localises to the cytoskeleton. The protein resides in the cilium axoneme. Its subcellular location is the dynein axonemal particle. Part of the dynein complex of multiciliated cell cilia. This is Dynein axonemal intermediate chain 2 (dnai2) from Xenopus laevis (African clawed frog).